Here is a 459-residue protein sequence, read N- to C-terminus: Argininosuccinate lyase (459 aa).

It belongs to the lyase 1 family. Argininosuccinate lyase subfamily.

Its subcellular location is the cytoplasm. It carries out the reaction 2-(N(omega)-L-arginino)succinate = fumarate + L-arginine. It functions in the pathway amino-acid biosynthesis; L-arginine biosynthesis; L-arginine from L-ornithine and carbamoyl phosphate: step 3/3. This Staphylococcus aureus (strain MSSA476) protein is Argininosuccinate lyase.